A 90-amino-acid polypeptide reads, in one-letter code: UPF0237 protein MMP0657 (90 aa).

The region spanning 5–79 is the ACT domain; sequence VITVVGVDKP…SEIGVKINVQ (75 aa).

Belongs to the UPF0237 family.

The chain is UPF0237 protein MMP0657 from Methanococcus maripaludis (strain DSM 14266 / JCM 13030 / NBRC 101832 / S2 / LL).